Consider the following 177-residue polypeptide: Peptidyl-tRNA hydrolase (177 aa).

Tyr-12 is a binding site for tRNA. His-17 acts as the Proton acceptor in catalysis. The tRNA site is built by Phe-63, Asn-65, and Asn-111.

Belongs to the PTH family. Monomer.

Its subcellular location is the cytoplasm. The enzyme catalyses an N-acyl-L-alpha-aminoacyl-tRNA + H2O = an N-acyl-L-amino acid + a tRNA + H(+). In terms of biological role, hydrolyzes ribosome-free peptidyl-tRNAs (with 1 or more amino acids incorporated), which drop off the ribosome during protein synthesis, or as a result of ribosome stalling. Catalyzes the release of premature peptidyl moieties from peptidyl-tRNA molecules trapped in stalled 50S ribosomal subunits, and thus maintains levels of free tRNAs and 50S ribosomes. In Buchnera aphidicola subsp. Acyrthosiphon pisum (strain 5A), this protein is Peptidyl-tRNA hydrolase.